The sequence spans 265 residues: MSAPAKRRCRGPAADLDSSFQKRLRKISIEGNIAAGKSTLVRLLEKHSDEWEVIPEPIAKWCNIQTSEDECKELSTSQKSGGNLLQMLYDKPTRWAYTFQTYACLSRVRAQLKPISAKLHEAEHPVQFFERSVYSDRYVFASNLFESGNINETEWAIYQDWHSWLLNQFQSEIELDGIIYLRTTPQKCMERLQKRGRKEEEGIDLEYLENLHYKHETWLYEKTMRVDFENLKEIPILVLDVNEDFKNDKIKQEYLIDEIKSFLTS.

31 to 39 (GNIAAGKST) serves as a coordination point for ATP. The substrate site is built by Glu56, Tyr89, and Gln100. Glu130 (proton acceptor) is an active-site residue. Substrate contacts are provided by Arg131 and Asp136. 191–195 (RLQKR) lines the ATP pocket. Glu200 contributes to the substrate binding site. 243–245 (EDF) serves as a coordination point for ATP.

It belongs to the DCK/DGK family. As to quaternary structure, homodimer. Expressed at high levels in adult intestine, spleen, thymus and testis with lower levels in skeletal muscle and eye. In the embryo, expressed at higher levels until day 10 with lower levels in later stages.

Its subcellular location is the nucleus. It catalyses the reaction 2'-deoxycytidine + a ribonucleoside 5'-triphosphate = dCMP + a ribonucleoside 5'-diphosphate + H(+). It carries out the reaction 2'-deoxyguanosine + ATP = dGMP + ADP + H(+). The enzyme catalyses 2'-deoxyadenosine + ATP = dAMP + ADP + H(+). Phosphorylates the deoxyribonucleosides deoxyadenosine, deoxycytidine and deoxyguanosine. Shows highest activity against deoxyguanosine followed by deoxycytidine and then deoxyadenosine. Shows only very minor activity against deoxyuridine and deoxythymidine. The sequence is that of Deoxycytidine kinase 2 from Gallus gallus (Chicken).